Reading from the N-terminus, the 584-residue chain is ETHYLENE INSENSITIVE 3-like 1 protein (584 aa).

The stretch at 41 to 74 (YTDDEMDVDELEKRMWRDKMRLKRLKEQQSKCKE) forms a coiled coil. Over residues 67-80 (EQQSKCKEGVDGSK) the composition is skewed to basic and acidic residues. Disordered regions lie at residues 67–93 (EQQS…RKKM) and 565–584 (EGMG…SIWF).

It belongs to the EIN3 family. Acts as a homodimer to bind the primary ethylene response element.

The protein localises to the nucleus. Its function is as follows. Probable transcription factor acting as a positive regulator in the ethylene response pathway. Could bind the primary ethylene response element present in the ETHYLENE-RESPONSE-FACTOR1 promoter. The chain is ETHYLENE INSENSITIVE 3-like 1 protein (EIL1) from Arabidopsis thaliana (Mouse-ear cress).